The chain runs to 145 residues: Major pollen allergen Lig v 1 (145 aa).

3 cysteine pairs are disulfide-bonded: Cys19–Cys90, Cys22–Cys131, and Cys43–Cys78. A glycan (N-linked (GlcNAc...) asparagine) is linked at Asn111.

This sequence belongs to the Ole e I family.

Its subcellular location is the secreted. The polypeptide is Major pollen allergen Lig v 1 (Ligustrum vulgare (Common privet)).